The sequence spans 380 residues: Cytochrome b (380 aa).

Transmembrane regions (helical) follow at residues 33-53 (FGSL…FLAM), 77-98 (WLIR…FLHV), 113-133 (WNMG…GYVL), and 178-198 (FFAF…VHLL). Heme contacts are provided by His-83 and His-97. Residues His-182 and His-196 each contribute to the heme site. His-201 is a binding site for a ubiquinone. 4 helical membrane-spanning segments follow: residues 226–246 (VKDF…TLFF), 288–308 (LGGV…PLLH), 320–340 (ITQT…WIGG), and 347–367 (FIII…IFMP).

It belongs to the cytochrome b family. The cytochrome bc1 complex contains 11 subunits: 3 respiratory subunits (MT-CYB, CYC1 and UQCRFS1), 2 core proteins (UQCRC1 and UQCRC2) and 6 low-molecular weight proteins (UQCRH/QCR6, UQCRB/QCR7, UQCRQ/QCR8, UQCR10/QCR9, UQCR11/QCR10 and a cleavage product of UQCRFS1). This cytochrome bc1 complex then forms a dimer. It depends on heme as a cofactor.

Its subcellular location is the mitochondrion inner membrane. Component of the ubiquinol-cytochrome c reductase complex (complex III or cytochrome b-c1 complex) that is part of the mitochondrial respiratory chain. The b-c1 complex mediates electron transfer from ubiquinol to cytochrome c. Contributes to the generation of a proton gradient across the mitochondrial membrane that is then used for ATP synthesis. The polypeptide is Cytochrome b (MT-CYB) (Microtus arvalis (Common vole)).